A 403-amino-acid polypeptide reads, in one-letter code: GDSL esterase/lipase At1g28590 (403 aa).

Positions Met1–Ser27 are cleaved as a signal peptide. The active-site Nucleophile is the Ser43. Residues Asn139 and Asn323 are each glycosylated (N-linked (GlcNAc...) asparagine). Residues Asp346 and His349 contribute to the active site.

This sequence belongs to the 'GDSL' lipolytic enzyme family.

The protein resides in the secreted. The polypeptide is GDSL esterase/lipase At1g28590 (Arabidopsis thaliana (Mouse-ear cress)).